Reading from the N-terminus, the 115-residue chain is Vespryn (115 aa).

A signal peptide spans 1 to 15 (MTWLLLCLLAQYENG). The B30.2/SPRY domain maps to 22–115 (SSSAKPYKTS…VKRKDHLRLT (94 aa)).

This sequence belongs to the ohanin/vespryn family. As to expression, expressed by the venom gland.

The protein resides in the secreted. Neurotoxin that produces dose-dependent hypolocomotion and hyperalgesia in mice. May directly act on the central nervous system, as it is 6500-fold more potent when administered intracerebroventricularly than intraperitoneal. This is Vespryn from Pogona barbata (Bearded dragon).